A 234-amino-acid chain; its full sequence is Thiamine import ATP-binding protein ThiQ (234 aa).

The 229-residue stretch at 2–230 (LVLDDVQYTY…HPSKTLQAFV (229 aa)) folds into the ABC transporter domain. Residue 32 to 39 (GPSGAGKS) coordinates ATP.

The protein belongs to the ABC transporter superfamily. Thiamine importer (TC 3.A.1.19.1) family. As to quaternary structure, the complex is composed of two ATP-binding proteins (ThiQ), two transmembrane proteins (ThiP) and a solute-binding protein (ThiB).

The protein resides in the cell inner membrane. The enzyme catalyses thiamine(out) + ATP + H2O = thiamine(in) + ADP + phosphate + H(+). Functionally, part of the ABC transporter complex ThiBPQ involved in thiamine import. Responsible for energy coupling to the transport system. The polypeptide is Thiamine import ATP-binding protein ThiQ (Vibrio parahaemolyticus serotype O3:K6 (strain RIMD 2210633)).